We begin with the raw amino-acid sequence, 931 residues long: Protocadherin gamma-A4 (931 aa).

Positions 1–28 (MAAPPARPDHTRLLHICLLLGVLVEIRA) are cleaved as a signal peptide. Cadherin domains are found at residues 29–133 (EQIR…PPSF), 134–242 (GTEQ…APVF), 243–347 (TQPE…APEV), 348–452 (TVTS…PPTF), 453–567 (PHAS…YPTF), and 570–682 (DDST…KPSA). The Extracellular portion of the chain corresponds to 29–692 (EQIRYSVFEE…DPDDSGLTLY (664 aa)). N-linked (GlcNAc...) asparagine glycosylation is found at Asn419 and Asn545. A helical membrane pass occupies residues 693–713 (LVVSVAAVSCVFLAFVTVLLA). Topologically, residues 714–931 (LKLRRWHKSR…KKKSGKKEKK (218 aa)) are cytoplasmic. Disordered stretches follow at residues 801–840 (KGDP…WPNN) and 901–931 (ATLT…KEKK). Residues 805–840 (NLQQAPPNTDWRFSQAQRPGTSGSQNGDDTGTWPNN) show a composition bias toward polar residues. Residues 921–931 (NKKKSGKKEKK) show a composition bias toward basic residues.

The protein localises to the cell membrane. In terms of biological role, potential calcium-dependent cell-adhesion protein. May be involved in the establishment and maintenance of specific neuronal connections in the brain. The sequence is that of Protocadherin gamma-A4 (PCDHGA4) from Pan troglodytes (Chimpanzee).